A 444-amino-acid polypeptide reads, in one-letter code: S-locus-specific glycoprotein (444 aa).

Residues 1–28 (MRGVIPNYHHSYTLFFFVILVLFPHVFS) form the signal peptide. One can recognise a Bulb-type lectin domain in the interval 31–159 (TLSPNEALTI…KTNDLDRFMW (129 aa)). N-linked (GlcNAc...) asparagine glycosylation is found at N43, N125, N243, and N396. Positions 356–437 (CGEGDGFLRM…GGQDLYVKVA (82 aa)) constitute a PAN domain. 2 disulfides stabilise this stretch: C387–C412 and C395–C397.

Stigma.

Its function is as follows. Involved in sporophytic self-incompatibility system (the inability of flowering plants to achieve self-fertilization). The chain is S-locus-specific glycoprotein (SLSG) from Brassica oleracea var. alboglabra (Chinese kale).